The sequence spans 122 residues: Ribosome-binding factor A (122 aa).

The protein belongs to the RbfA family. Monomer. Binds 30S ribosomal subunits, but not 50S ribosomal subunits or 70S ribosomes.

It is found in the cytoplasm. Functionally, one of several proteins that assist in the late maturation steps of the functional core of the 30S ribosomal subunit. Associates with free 30S ribosomal subunits (but not with 30S subunits that are part of 70S ribosomes or polysomes). Required for efficient processing of 16S rRNA. May interact with the 5'-terminal helix region of 16S rRNA. The polypeptide is Ribosome-binding factor A (Burkholderia mallei (strain NCTC 10229)).